We begin with the raw amino-acid sequence, 274 residues long: NH(3)-dependent NAD(+) synthetase (274 aa).

Residue 46–53 coordinates ATP; sequence GISGGQDS. Asp52 provides a ligand contact to Mg(2+). Arg140 contributes to the deamido-NAD(+) binding site. Residue Thr160 coordinates ATP. Position 165 (Glu165) interacts with Mg(2+). Deamido-NAD(+) contacts are provided by Lys173 and Asp180. ATP is bound by residues Lys189 and Thr211. Residue 260-261 coordinates deamido-NAD(+); the sequence is HK.

Belongs to the NAD synthetase family. Homodimer.

It catalyses the reaction deamido-NAD(+) + NH4(+) + ATP = AMP + diphosphate + NAD(+) + H(+). It participates in cofactor biosynthesis; NAD(+) biosynthesis; NAD(+) from deamido-NAD(+) (ammonia route): step 1/1. Its function is as follows. Catalyzes the ATP-dependent amidation of deamido-NAD to form NAD. Uses ammonia as a nitrogen source. The chain is NH(3)-dependent NAD(+) synthetase from Listeria monocytogenes serotype 4b (strain CLIP80459).